We begin with the raw amino-acid sequence, 337 residues long: tRNA N6-adenosine threonylcarbamoyltransferase (337 aa).

Fe cation is bound by residues His111 and His115. Substrate contacts are provided by residues 134-138 (LVSGG), Asp167, Gly180, and Asn272. Fe cation is bound at residue Asp300.

The protein belongs to the KAE1 / TsaD family. Requires Fe(2+) as cofactor.

It is found in the cytoplasm. The catalysed reaction is L-threonylcarbamoyladenylate + adenosine(37) in tRNA = N(6)-L-threonylcarbamoyladenosine(37) in tRNA + AMP + H(+). Functionally, required for the formation of a threonylcarbamoyl group on adenosine at position 37 (t(6)A37) in tRNAs that read codons beginning with adenine. Is involved in the transfer of the threonylcarbamoyl moiety of threonylcarbamoyl-AMP (TC-AMP) to the N6 group of A37, together with TsaE and TsaB. TsaD likely plays a direct catalytic role in this reaction. The sequence is that of tRNA N6-adenosine threonylcarbamoyltransferase from Salmonella agona (strain SL483).